Consider the following 440-residue polypeptide: Histidinol dehydrogenase homolog 2 (440 aa).

Position 265 (His265) interacts with Zn(2+). Active-site proton acceptor residues include Glu333 and His334. Position 426 (His426) interacts with Zn(2+).

This sequence belongs to the histidinol dehydrogenase family. Zn(2+) is required as a cofactor.

This is Histidinol dehydrogenase homolog 2 from Mesorhizobium japonicum (strain LMG 29417 / CECT 9101 / MAFF 303099) (Mesorhizobium loti (strain MAFF 303099)).